We begin with the raw amino-acid sequence, 430 residues long: C-terminal-binding protein 1 (430 aa).

Residues 1–59 are interaction with GLIS2 1; that stretch reads MSGVRPPIMNGPMHPRPLVALLDGRDCTVEMPILKDVATVAFCDAQSTQEIHEKVLNEA. NAD(+) contacts are provided by residues Ser-89, 169–174, Asp-193, 226–232, 253–255, and Asp-279; these read IGLGRV, CGLNEHN, and TAR. The active site involves Arg-255. Residues 277-349 are interaction with GLIS2 2; that stretch reads ALDVHESEPF…VNKDHLTAAT (73 aa). Glu-284 is a catalytic residue. Ser-289 is modified (phosphoserine). The active-site Proton donor is His-304. Residues 398 to 430 form a disordered region; that stretch reads SHGLPPVAHPPHAPSPGQTVKPEADRDHTTDQL. Ser-412 carries the phosphoserine modification. Residue Lys-418 forms a Glycyl lysine isopeptide (Lys-Gly) (interchain with G-Cter in SUMO) linkage. Basic and acidic residues predominate over residues 419 to 430; sequence PEADRDHTTDQL.

This sequence belongs to the D-isomer specific 2-hydroxyacid dehydrogenase family. In terms of assembly, homo- or heterodimer. Heterodimer with CTBP2. Interacts with ELK3 (via its PXDLS motif). Interacts with RBBP8 (via its PXDLS motif); the interaction is disrupted by binding to adenovirus E1A. Interacts with PNN, MECOM and ZFHX1B. Interacts with ZNF366 (via PXDLS motif). Interaction with SATB1 (non-acetylated form); the interaction stabilizes its attachment to DNA and promotes transcription repression. Interacts with PRDM16; the interaction represses white adipose tissue (WAT)-specific genes expression. Interacts with GLIS2, HIPK2, FOXP1, FOXP2, HDAC4, HDAC5, HDAC9, NRIP1 and WIZ. Interacts with ZNF217. Interacts with BCL6; the interaction is required for BCL6 transcriptional autoinhibition and inhibition of some BCL6 target genes. Interacts with IKZF4. Interacts with MCRIP1 (unphosphorylated form, via the PXDLS motif); competitively inhibiting CTBP-ZEB1 interaction. Interacts with Bassoon/BSN; this interaction targets and anchors CTBP1 to presynapses. Interacts with SIMC1. It depends on NAD(+) as a cofactor. The level of phosphorylation appears to be regulated during the cell cycle. Phosphorylation by HIPK2 on Ser-412 induces proteasomal degradation. Post-translationally, ADP-ribosylated; when cells are exposed to brefeldin A. In terms of processing, sumoylation on Lys-418 is promoted by the E3 SUMO-protein ligase CBX4.

It localises to the cytoplasm. Its subcellular location is the nucleus. The protein resides in the synapse. The protein localises to the synaptosome. Functionally, corepressor targeting diverse transcription regulators such as GLIS2 or BCL6. Has dehydrogenase activity. Involved in controlling the equilibrium between tubular and stacked structures in the Golgi complex. Functions in brown adipose tissue (BAT) differentiation. The chain is C-terminal-binding protein 1 (Ctbp1) from Rattus norvegicus (Rat).